Here is a 509-residue protein sequence, read N- to C-terminus: 2-isopropylmalate synthase (509 aa).

The Pyruvate carboxyltransferase domain maps to 4-266 (VRIFDTTLRD…YTGIKTEEIY (263 aa)). Mn(2+) is bound by residues Asp-13, His-201, His-203, and Asn-237. Residues 390–509 (TLDYFHISTG…FDYQAKGEKQ (120 aa)) are regulatory domain.

This sequence belongs to the alpha-IPM synthase/homocitrate synthase family. LeuA type 1 subfamily. In terms of assembly, homodimer. The cofactor is Mn(2+).

It is found in the cytoplasm. It catalyses the reaction 3-methyl-2-oxobutanoate + acetyl-CoA + H2O = (2S)-2-isopropylmalate + CoA + H(+). Its pathway is amino-acid biosynthesis; L-leucine biosynthesis; L-leucine from 3-methyl-2-oxobutanoate: step 1/4. Functionally, catalyzes the condensation of the acetyl group of acetyl-CoA with 3-methyl-2-oxobutanoate (2-ketoisovalerate) to form 3-carboxy-3-hydroxy-4-methylpentanoate (2-isopropylmalate). This Carboxydothermus hydrogenoformans (strain ATCC BAA-161 / DSM 6008 / Z-2901) protein is 2-isopropylmalate synthase.